We begin with the raw amino-acid sequence, 958 residues long: Voltage-gated inwardly rectifying potassium channel KCNH6 (958 aa).

Over 1 to 261 (MPVRRGHVAP…YSPFKAVWDW (261 aa)) the chain is Cytoplasmic. The region spanning 41-70 (IIYCNDGFCELFGYSRVEVMQQPCTCDFLT) is the PAS domain. The PAC domain maps to 92-144 (CKVDILYYRKDASSFRCLVDVVPVKNEDGAVIMFILNFEDLAQLLAKCSSRSL). The chain crosses the membrane as a helical span at residues 262-282 (LILLLVIYTAVFTPYSAAFLL). The Extracellular portion of the chain corresponds to 283–298 (SDQDESRRGACSYTCS). The chain crosses the membrane as a helical span at residues 299 to 319 (PLTVVDLIVDIMFVVDIVINF). At 320-340 (RTTYVNTNDEVVSHPRRIAVH) the chain is on the cytoplasmic side. Residues 341-361 (YFKGWFLIDMVAAIPFDLLIF) traverse the membrane as a helical segment. Residues 362–370 (RTGSDETTT) are Extracellular-facing. Residues 371-391 (LIGLLKTARLLRLVRVARKLD) form a helical; Voltage-sensor membrane-spanning segment. Topologically, residues 392-398 (RYSEYGA) are cytoplasmic. A helical membrane pass occupies residues 399–419 (AVLFLLMCTFALIAHWLACIW). Over 420 to 463 (YAIGNVERPYLEHKIGWLDSLGVQLGKRYNGSDPASGPSVQDKY) the chain is Extracellular. An N-linked (GlcNAc...) (complex) asparagine glycan is attached at N449. An intramembrane region (pore-forming) is located at residues 464-484 (VTALYFTFSSLTSVGFGNVSP). Residues 476–481 (SVGFGN) carry the Selectivity filter motif. Residues 485–490 (NTNSEK) lie on the Extracellular side of the membrane. A helical transmembrane segment spans residues 491-511 (VFSICVMLIGSLMYASIFGNV). Residues 512–958 (SAIIQRLYSG…DPGFAGSWGH (447 aa)) lie on the Cytoplasmic side of the membrane. Residues 594–694 (AFSGAGKGCL…IQRADLLEVL (101 aa)) form a cNMP-binding domain region. 2 disordered regions span residues 720–751 (GLHSSPRQAPGSQDHQGFFLSDNQSDAAPPLS) and 845–910 (TTSP…PPLA). Polar residues predominate over residues 724 to 745 (SPRQAPGSQDHQGFFLSDNQSD).

Belongs to the potassium channel family. H (Eag) (TC 1.A.1.20) subfamily. Kv11.2/KCNH6 sub-subfamily. In terms of assembly, the potassium channel is probably composed of a homo- or heterotetrameric complex of pore-forming alpha subunits that can associate only within their subfamily. As to expression, expressed in prolactin-secreting adenomas.

The protein resides in the cell membrane. The enzyme catalyses K(+)(in) = K(+)(out). In terms of biological role, pore-forming (alpha) subunit of voltage-gated inwardly rectifying potassium channel. Characterized by unusual gating kinetics by producing relatively small outward currents during membrane depolarization and large inward currents during subsequent repolarization which reflect a rapid inactivation during depolarization and quick recovery from inactivation but slow deactivation (closing) during repolarization. Activates even more slowly than KCNH2. This Homo sapiens (Human) protein is Voltage-gated inwardly rectifying potassium channel KCNH6.